The following is a 306-amino-acid chain: MISASAVKELRERTGAGMMACKKALSEANGDSEKAVEILREKGLAAAAKKAGRVASEGLVVAYVNEDGKSGAIAEVNCETDFVSANEDFKALAENIVKLAAKSNSNTVEELLEENYVDGSSKLKDVITALIAKLGENINLRRFTKFSNENGTIQSYIHGDGRIGVLVNLNADKISDEVHTLAKDICMQIAAANPLYLDETSVDQTALDKEREIYKVQALNEGKPEKIVEKMVEGRIKKYLKEVCLLDQVWVRDSDLTISKLVAKKSKELSAAISIADFVRFERGEGIEKKEENFAEEVQKQMQQSK.

The tract at residues 80-83 (TDFV) is involved in Mg(2+) ion dislocation from EF-Tu.

This sequence belongs to the EF-Ts family.

It is found in the cytoplasm. Functionally, associates with the EF-Tu.GDP complex and induces the exchange of GDP to GTP. It remains bound to the aminoacyl-tRNA.EF-Tu.GTP complex up to the GTP hydrolysis stage on the ribosome. This is Elongation factor Ts from Clostridium acetobutylicum (strain ATCC 824 / DSM 792 / JCM 1419 / IAM 19013 / LMG 5710 / NBRC 13948 / NRRL B-527 / VKM B-1787 / 2291 / W).